Reading from the N-terminus, the 161-residue chain is Nucleotide-binding protein Pput_4372 (161 aa).

This sequence belongs to the YajQ family.

Nucleotide-binding protein. The sequence is that of Nucleotide-binding protein Pput_4372 from Pseudomonas putida (strain ATCC 700007 / DSM 6899 / JCM 31910 / BCRC 17059 / LMG 24140 / F1).